Reading from the N-terminus, the 83-residue chain is MSGATGERPFSDILTSIRYWVIHSITIPSLFIAGWLFVSTGLAYDVFGSPRPNEYFTEDRQETPLITDRFNALEQVKKFSEVN.

Residues 21 to 35 traverse the membrane as a helical segment; the sequence is VIHSITIPSLFIAGW. His23 contributes to the heme binding site.

This sequence belongs to the PsbE/PsbF family. In terms of assembly, heterodimer of an alpha subunit and a beta subunit. PSII is composed of 1 copy each of membrane proteins PsbA, PsbB, PsbC, PsbD, PsbE, PsbF, PsbH, PsbI, PsbJ, PsbK, PsbL, PsbM, PsbT, PsbX, PsbY, PsbZ, Psb30/Ycf12, at least 3 peripheral proteins of the oxygen-evolving complex and a large number of cofactors. It forms dimeric complexes. It depends on heme b as a cofactor.

It is found in the plastid. Its subcellular location is the chloroplast thylakoid membrane. Functionally, this b-type cytochrome is tightly associated with the reaction center of photosystem II (PSII). PSII is a light-driven water:plastoquinone oxidoreductase that uses light energy to abstract electrons from H(2)O, generating O(2) and a proton gradient subsequently used for ATP formation. It consists of a core antenna complex that captures photons, and an electron transfer chain that converts photonic excitation into a charge separation. This is Cytochrome b559 subunit alpha from Chlorella vulgaris (Green alga).